The following is a 1373-amino-acid chain: DNA-directed RNA polymerase subunit beta (1373 aa).

This sequence belongs to the RNA polymerase beta chain family. The RNAP catalytic core consists of 2 alpha, 1 beta, 1 beta' and 1 omega subunit. When a sigma factor is associated with the core the holoenzyme is formed, which can initiate transcription.

It carries out the reaction RNA(n) + a ribonucleoside 5'-triphosphate = RNA(n+1) + diphosphate. DNA-dependent RNA polymerase catalyzes the transcription of DNA into RNA using the four ribonucleoside triphosphates as substrates. The chain is DNA-directed RNA polymerase subunit beta from Rickettsia massiliae.